Here is a 442-residue protein sequence, read N- to C-terminus: Trigger factor (442 aa).

Residues 163–248 (NDLVTINYCI…ILNVEEKQEN (86 aa)) enclose the PPIase FKBP-type domain.

This sequence belongs to the FKBP-type PPIase family. Tig subfamily.

The protein localises to the cytoplasm. The enzyme catalyses [protein]-peptidylproline (omega=180) = [protein]-peptidylproline (omega=0). In terms of biological role, involved in protein export. Acts as a chaperone by maintaining the newly synthesized protein in an open conformation. Functions as a peptidyl-prolyl cis-trans isomerase. This is Trigger factor from Buchnera aphidicola subsp. Schizaphis graminum (strain Sg).